The primary structure comprises 199 residues: Superoxide dismutase [Mn/Fe] (199 aa).

Residues His-27, His-81, Asp-161, and His-165 each contribute to the Fe(3+) site. Residues His-27, His-81, Asp-161, and His-165 each coordinate Mn(2+).

Belongs to the iron/manganese superoxide dismutase family. As to quaternary structure, homodimer. Requires Mn(2+) as cofactor. Fe(3+) is required as a cofactor.

It catalyses the reaction 2 superoxide + 2 H(+) = H2O2 + O2. Its function is as follows. Destroys superoxide anion radicals which are normally produced within the cells and which are toxic to biological systems. Catalyzes the dismutation of superoxide anion radicals into O2 and H2O2 by successive reduction and oxidation of the transition metal ion at the active site. The protein is Superoxide dismutase [Mn/Fe] (sodA) of Staphylococcus haemolyticus (strain JCSC1435).